Consider the following 63-residue polypeptide: Large ribosomal subunit protein uL29 (63 aa).

It belongs to the universal ribosomal protein uL29 family.

This is Large ribosomal subunit protein uL29 from Alcanivorax borkumensis (strain ATCC 700651 / DSM 11573 / NCIMB 13689 / SK2).